The chain runs to 369 residues: Cytoplasmic tRNA 2-thiolation protein 1 (369 aa).

This sequence belongs to the TtcA family. CTU1/NCS6/ATPBD3 subfamily.

Its subcellular location is the cytoplasm. The protein operates within tRNA modification; 5-methoxycarbonylmethyl-2-thiouridine-tRNA biosynthesis. Functionally, plays a central role in 2-thiolation of mcm(5)S(2)U at tRNA wobble positions of tRNA(Lys), tRNA(Glu) and tRNA(Gln). Directly binds tRNAs and probably acts by catalyzing adenylation of tRNAs, an intermediate required for 2-thiolation. It is unclear whether it acts as a sulfurtransferase that transfers sulfur from thiocarboxylated URM1 onto the uridine of tRNAs at wobble position. Prior mcm(5) tRNA modification by the elongator complex is required for 2-thiolation. May also be involved in protein urmylation. This is Cytoplasmic tRNA 2-thiolation protein 1 from Cryptococcus neoformans var. neoformans serotype D (strain JEC21 / ATCC MYA-565) (Filobasidiella neoformans).